Consider the following 293-residue polypeptide: Epidermal growth factor-like protein 8 (293 aa).

The first 25 residues, 1–25 (MGSRAELCTLLGGFSFLLLLIPGEG), serve as a signal peptide directing secretion. The region spanning 34-112 (SQGVCSKQTL…RHPGALTCEA (79 aa)) is the EMI domain. 9 disulfide bridges follow: Cys38/Cys97, Cys65/Cys71, Cys96/Cys110, Cys114/Cys124, Cys118/Cys130, Cys132/Cys141, Cys148/Cys159, Cys155/Cys168, and Cys170/Cys183. Asn50 is a glycosylation site (N-linked (GlcNAc...) asparagine). Residues 111–142 (EAICAKPCLNGGVCVRPDQCECAPGWGGKHCH) form the EGF-like 1 domain. Residues 144–184 (DVDECRTSITLCSHHCFNTAGSFTCGCPHDLVLGVDGRTCM) form the EGF-like 2; calcium-binding domain. Residues 195 to 232 (SILSVAVREAEKDERALKQEIHELRGRLERLEQWAGQA) adopt a coiled-coil conformation.

It is found in the secreted. The sequence is that of Epidermal growth factor-like protein 8 (EGFL8) from Homo sapiens (Human).